A 1978-amino-acid chain; its full sequence is MSMDIPETVSLRKFRDFSARQKQELYETLLELAESIDELPKKSLRKTLELTLAVLEYKGEQVQQLQESAAGGLSSDRRLQDENEKLKRMLQKLEDERDGLKSKAKELGEEIRQLELRLQEAAQQAEISDKDSSDPLSELDKQEQLLQNIDSKNKHIKRLLKEIETLQNQNIAQSKTIVLHERELQTIKANLVQLSQDITKVEQERKSLKQKEQQQALEITRLEGNLTFLEVEREKQEVEMRQFLDKYEAKSLGWRQALDDRDKEVERLKKQLEGKSISSGQTNSSNSQSQQEEEHAKLRQLLESREQRIEKLEEKIKSMAEEMVSSTRAMNQLCQEKERAHDPEQPRACCQMIEERLREATARCQQLSEMLEAAEQDNVLKSQQALHAISALEAYKRDEDGLIPALRRCSGLEQKVAARDKQLRAYIQELNSLHEVVQENELLRRKLHIPDDVVIMAKNVHSKQRNKDKQIERLTLKLRTSEELRLQLKLEKSELRRKLLELQQDSPQTLNESLQAPSEVGEVPHSVHLENSPRRGQGDGAASSEMQNRYDEVLAENETLRSGMYEILEKLREYDATSEHITIDSDLLRRLIEALPGGTTTPQRLQGQLLELKAREEALRQLLEQQNYSDSETGELSSVHSLCEVPEIAEEHPVEEDAVLNTATRPSSPTEATMGLRRPTVPDPEEKPTNEALAELSILRKHYDELRLHMSADGSDLMNRNQELHDQMIALELQLEQQRNSYSYMRRDYDQLLTETRKQELRFIDDKASLARQLEHSKSELCEAREELEQVNRRNLYTAEEQQKLEHRNAILSMQLGQAMEQLLGELKPTEICAEYGIIRENYQLDYITAQDFEEQQQELLTWRSKQAELQRETKQLEGLLHVANEQIHSQQRLLNEITDNHINLRHLVADLQSSSDEKLMLAKVQRDLDSVKAECSRLETEREKLQLKADCLQTQLEASELSLKQTQQDFQQERTNSDIKHKFLQHSLFMLKDKYAKFTPLVFLTNFVFAYQKFQRRLEEEQVQQRHRDHTALIDEVTAVVQAKIGLNEESSQQLVKLIKSETQTRLLEQRCEILQAKQEELVRELGELRMSQATDTEHWSTIQALFGEGEPRSQLKVDAETNTDAVAPNLAMRRAVQLIDRESSPIGSPLRKHPHLDTATQTLEAQVEFSETAVQTNGILSQQNQAVQTADAVEDNRRDSRAELQKMQETLQEANQRIEILGKQLEASRSESRESASPQGGVVEKTILSFHTLLLEKDQSIQKYQDLLQTERDQSQQALSKQVAENESLRATVNNLNFNIKTKDAEIQGLKEKLRQKPEVPVERNPSTDSRSSSSSDSSVNELTDEKIEELFESSSVERPPQEELEVPVEAGPENIVTEEPEGEEEKQDTEELKEVPTLHKQIKDLKDKLEYSERSLKTREEEVDILKEKLKLCQEREKSVESTVNPELDQLRIFLDEKDKHIKDLMDTLKNFHDDQQRYIKDTSNFSEDQIAKLAADLNRTEATNKIYHTQMEALRRQLANVTQREKQARDLSQSLRQQLLKRPVVSIKTELNARVKNENQLKRIQQLELDLDEARGQLQRQQTLLEAKRTRSANEVQLWEKQKRYQQQAEKTKARLEETELALEKTRALLQAARTTIARLEKDKQILESKLGRNGPPSNSSGGNNLKCCRTPSCPNLQHVGVSKFAPSPSESPETYTGPSSECSSPAHHHTQIFDQSQLDLIEALKSRIELQQRKIIAMELEGRGSNALTTELEKLQERCQAIEAQNIRLEARNLQLQLDSDLLRQGDSSDRLQKRIKHLEDYIMALKEEMARNESRRELGSGLKVSTNQGQSAEQTILSLRNLVEKLRSENKFLKDGRRSTESRSSMDSTPAEAARLQQQHAEALEKISALQQELQKRTTKCSQCGGRSKDAANEELKFIKEQLVKKTQLLQKAKVLLTRAAAKEKVLREQLALWKRKCSELQNVPVIDEISE.

Positions 1 to 650 (MSMDIPETVS…SLCEVPEIAE (650 aa)) are necessary and sufficient for function in ciliogenesis, transition zone (TZ) assembly, and recruitment of DZP1 and Mks1 to the TZ. Also required for subcellular localization to the cilium basal body. Coiled coils occupy residues 76-384 (DRRL…KSQQ) and 471-505 (IERL…LQQD). Positions 271–296 (QLEGKSISSGQTNSSNSQSQQEEEHA) are disordered. Low complexity predominate over residues 276-290 (SISSGQTNSSNSQSQ). Residues 663–688 (ATRPSSPTEATMGLRRPTVPDPEEKP) are disordered. 3 coiled-coil regions span residues 853–887 (FEEQ…ANEQ), 922–970 (LAKV…TQQD), and 1192–1233 (ADAV…SRSE). The span at 1313–1324 (KEKLRQKPEVPV) shows a compositional bias: basic and acidic residues. The tract at residues 1313–1397 (KEKLRQKPEV…EKQDTEELKE (85 aa)) is disordered. A compositionally biased stretch (low complexity) spans 1329–1341 (STDSRSSSSSDSS). The span at 1379–1391 (VTEEPEGEEEKQD) shows a compositional bias: acidic residues. Coiled coils occupy residues 1405–1439 (IKDL…CQER) and 1501–1654 (LNRT…LESK). Disordered stretches follow at residues 1684–1714 (VGVS…AHHH) and 1859–1884 (LKDG…RLQQ). Residues 1693–1708 (PSESPETYTGPSSECS) are compositionally biased toward polar residues. The stretch at 1726–1935 (IEALKSRIEL…KEQLVKKTQL (210 aa)) forms a coiled coil.

Interacts (via N-terminus) with DZIP1. Expressed in sensory neurons type I and in germ cells (at protein level).

It localises to the cytoplasm. It is found in the cytoskeleton. The protein localises to the cilium basal body. The protein resides in the microtubule organizing center. Its subcellular location is the centrosome. It localises to the centriole. Essential for ciliogenesis in sensory neurons and spermatocytes. During neuron and spermatocyte ciliogenesis, essential for initiating transition zone (TZ) assembly and is required for the formation of diverse connections between microtubules and between microtubules and the membrane. Regulates TZ assembly by recruiting DZIP1 to the plasma membrane where it promotes early ciliary membrane formation resulting in the initiation of TZ assembly. The sequence is that of Centrosomal protein Cep290 from Drosophila melanogaster (Fruit fly).